We begin with the raw amino-acid sequence, 617 residues long: Chaperone protein HscA homolog (617 aa).

This sequence belongs to the heat shock protein 70 family.

In terms of biological role, chaperone involved in the maturation of iron-sulfur cluster-containing proteins. Has a low intrinsic ATPase activity which is markedly stimulated by HscB. The protein is Chaperone protein HscA homolog of Photobacterium profundum (strain SS9).